Consider the following 170-residue polypeptide: Adenine phosphoribosyltransferase (170 aa).

The protein belongs to the purine/pyrimidine phosphoribosyltransferase family. As to quaternary structure, homodimer.

It localises to the cytoplasm. The catalysed reaction is AMP + diphosphate = 5-phospho-alpha-D-ribose 1-diphosphate + adenine. It functions in the pathway purine metabolism; AMP biosynthesis via salvage pathway; AMP from adenine: step 1/1. Catalyzes a salvage reaction resulting in the formation of AMP, that is energically less costly than de novo synthesis. The sequence is that of Adenine phosphoribosyltransferase from Bacillus pumilus (strain SAFR-032).